The chain runs to 358 residues: Mesaconyl-CoA hydratase (358 aa).

Belongs to the enoyl-CoA hydratase/isomerase family. In terms of assembly, homodimer.

The enzyme catalyses (2R,3S)-beta-methylmalyl-CoA = 2-methylfumaryl-CoA + H2O. Its activity is regulated as follows. Shows highest activity at 0.5 M KCl. Does not require divalent ions for activity. In terms of biological role, involved in the methylaspartate cycle. Catalyzes the reversible hydration of mesaconyl-CoA (2-methylfumaryl-CoA) to yield beta-methylmalyl-CoA ((2R,3S)-beta-methylmalyl-CoA). Also shows activity with mesaconyl-C4-CoA (3-methylfumaryl-CoA), (S)-citramalyl-CoA and (S)-malyl-CoA. The protein is Mesaconyl-CoA hydratase of Haloarcula hispanica (strain ATCC 33960 / DSM 4426 / JCM 8911 / NBRC 102182 / NCIMB 2187 / VKM B-1755).